The following is a 206-amino-acid chain: MPTVGLFNQEGKQVGDIQLNANVFEVEVNKHALHQVVVALLANKRQGTQSAKTRTEVRGGGIKPWRQKGTGRARQGSIRAPQWIKGGIVFAPKPRDYRVSIPKSMRRVAMKSALTSKVNDGQMVVLESLSFEAPKTKQFIEMLSAFNAKKTLIITAESNEAVYKSARNIQGVSVIPVNNINVYDLLKFEKLIITKDAVSKIEEVYA.

A disordered region spans residues 49–76; that stretch reads QSAKTRTEVRGGGIKPWRQKGTGRARQG.

This sequence belongs to the universal ribosomal protein uL4 family. As to quaternary structure, part of the 50S ribosomal subunit.

One of the primary rRNA binding proteins, this protein initially binds near the 5'-end of the 23S rRNA. It is important during the early stages of 50S assembly. It makes multiple contacts with different domains of the 23S rRNA in the assembled 50S subunit and ribosome. Its function is as follows. Forms part of the polypeptide exit tunnel. The polypeptide is Large ribosomal subunit protein uL4 (Clostridium botulinum (strain Alaska E43 / Type E3)).